The primary structure comprises 287 residues: uncharacterized protein (287 aa).

The disordered stretch occupies residues 1–44 (MAAPRNLTGDGGARQLVKDEESPAASSAAKGLLNDDSPTGKRTK). At serine 37 the chain carries Phosphoserine. A run of 5 helical transmembrane segments spans residues 55 to 75 (FAVF…IYLT), 124 to 144 (TFMI…FGVV), 147 to 167 (FVLV…LSKL), 218 to 238 (PIVD…LMPA), and 260 to 280 (DFKT…PALL).

Its subcellular location is the membrane. This is an uncharacterized protein from Arabidopsis thaliana (Mouse-ear cress).